Consider the following 165-residue polypeptide: Neurotrophin-3 (165 aa).

The N-terminal stretch at 1–3 is a signal peptide; that stretch reads IQS. The propeptide occupies 4 to 119; it reads TSMDQGSLSE…VLNRTSRRKR (116 aa). A glycan (N-linked (GlcNAc...) asparagine) is linked at N112.

Belongs to the NGF-beta family.

Its subcellular location is the secreted. Seems to promote the survival of visceral and proprioceptive sensory neurons. The protein is Neurotrophin-3 (NTF3) of Anilius scytale (Coral cylinder snake).